Here is a 386-residue protein sequence, read N- to C-terminus: bHLH transcription factor RHL1 (386 aa).

Residues F119 to S186 form a disordered region. Over residues Q127–Q137 the composition is skewed to low complexity. A compositionally biased stretch (polar residues) spans G138–T151. The tract at residues Q180–R193 is basic motif; degenerate. Residues Q180–L229 form the bHLH domain. Residues E194–L229 are helix-loop-helix motif.

In terms of tissue distribution, expressed in root epidermal cells.

It is found in the nucleus. Transcription factor that regulates the development of root hairs. The protein is bHLH transcription factor RHL1 of Lotus japonicus (Lotus corniculatus var. japonicus).